Consider the following 179-residue polypeptide: Large ribosomal subunit protein uL5 (179 aa).

It belongs to the universal ribosomal protein uL5 family. In terms of assembly, part of the 50S ribosomal subunit; part of the 5S rRNA/L5/L18/L25 subcomplex. Contacts the 5S rRNA and the P site tRNA. Forms a bridge to the 30S subunit in the 70S ribosome.

Functionally, this is one of the proteins that bind and probably mediate the attachment of the 5S RNA into the large ribosomal subunit, where it forms part of the central protuberance. In the 70S ribosome it contacts protein S13 of the 30S subunit (bridge B1b), connecting the 2 subunits; this bridge is implicated in subunit movement. Contacts the P site tRNA; the 5S rRNA and some of its associated proteins might help stabilize positioning of ribosome-bound tRNAs. In Enterococcus faecalis (strain ATCC 700802 / V583), this protein is Large ribosomal subunit protein uL5.